The chain runs to 671 residues: ATP-dependent zinc metalloprotease FtsH (671 aa).

The Cytoplasmic portion of the chain corresponds to 1–22 (MANPNNNNDNKQNNNNNFFNDN). Residues 23–43 (PLLAFAIFSIVIILIFKSFVG) form a helical membrane-spanning segment. Over 44-130 (EGESLGTMMN…ISYEGVVGNG (87 aa)) the chain is Periplasmic. Residues 131–151 (FFSELISMMLPILIFFAIWIF) traverse the membrane as a helical segment. Residues 152–671 (LAKKMSKGMG…SEESDNNKEA (520 aa)) lie on the Cytoplasmic side of the membrane. Residue 224 to 231 (GPPGTGKT) participates in ATP binding. Histidine 447 lines the Zn(2+) pocket. The active site involves glutamate 448. Zn(2+) is bound by residues histidine 451 and aspartate 525. The segment at 630–671 (EKGMPSRLAHKDKVAKNKAEADKKEEALKKEISEESDNNKEA) is disordered.

It in the central section; belongs to the AAA ATPase family. In the C-terminal section; belongs to the peptidase M41 family. In terms of assembly, homohexamer. Zn(2+) serves as cofactor.

The protein resides in the cell inner membrane. In terms of biological role, acts as a processive, ATP-dependent zinc metallopeptidase for both cytoplasmic and membrane proteins. Plays a role in the quality control of integral membrane proteins. The protein is ATP-dependent zinc metalloprotease FtsH of Sulfurovum sp. (strain NBC37-1).